A 126-amino-acid polypeptide reads, in one-letter code: Glycine cleavage system H protein (126 aa).

A Lipoyl-binding domain is found at 22 to 104; that stretch reads VAYVGITDYA…YGKGWLIKIS (83 aa). At K63 the chain carries N6-lipoyllysine.

It belongs to the GcvH family. As to quaternary structure, the glycine cleavage system is composed of four proteins: P, T, L and H. Requires (R)-lipoate as cofactor.

Functionally, the glycine cleavage system catalyzes the degradation of glycine. The H protein shuttles the methylamine group of glycine from the P protein to the T protein. In Parabacteroides distasonis (strain ATCC 8503 / DSM 20701 / CIP 104284 / JCM 5825 / NCTC 11152), this protein is Glycine cleavage system H protein.